A 223-amino-acid polypeptide reads, in one-letter code: Cutinase 4 (223 aa).

The N-terminal stretch at 1–26 (MPLPLLPPLLLPLEALLDLALHLVDS) is a signal peptide. Cys-60 and Cys-133 form a disulfide bridge. Ser-144 (nucleophile) is an active-site residue. Cys-187 and Cys-194 are joined by a disulfide. Asp-191 is an active-site residue. The active-site Proton donor/acceptor is the His-203.

This sequence belongs to the cutinase family. The 2 disulfide bonds play a critical role in holding the catalytic residues in juxta-position; reduction of the disulfide bridges results in the complete inactivation of the enzyme.

The protein resides in the secreted. It catalyses the reaction cutin + H2O = cutin monomers.. Catalyzes the hydrolysis of complex carboxylic polyesters found in the cell wall of plants. Degrades cutin, a macromolecule that forms the structure of the plant cuticle. Also degrades suberin, a specialized macromolecule found in the cell wall of various plant tissues. This chain is Cutinase 4, found in Emericella nidulans (strain FGSC A4 / ATCC 38163 / CBS 112.46 / NRRL 194 / M139) (Aspergillus nidulans).